We begin with the raw amino-acid sequence, 150 residues long: Large ribosomal subunit protein bL9 (150 aa).

It belongs to the bacterial ribosomal protein bL9 family.

Its function is as follows. Binds to the 23S rRNA. This Paraburkholderia xenovorans (strain LB400) protein is Large ribosomal subunit protein bL9.